Here is a 308-residue protein sequence, read N- to C-terminus: Aspartate carbamoyltransferase catalytic subunit (308 aa).

Residues Arg55 and Thr56 each contribute to the carbamoyl phosphate site. Lys84 contributes to the L-aspartate binding site. Residues Arg105, His133, and Gln136 each coordinate carbamoyl phosphate. Residues Arg167 and Arg228 each coordinate L-aspartate. Carbamoyl phosphate-binding residues include Leu267 and Pro268.

Belongs to the aspartate/ornithine carbamoyltransferase superfamily. ATCase family. In terms of assembly, heterooligomer of catalytic and regulatory chains.

It carries out the reaction carbamoyl phosphate + L-aspartate = N-carbamoyl-L-aspartate + phosphate + H(+). The protein operates within pyrimidine metabolism; UMP biosynthesis via de novo pathway; (S)-dihydroorotate from bicarbonate: step 2/3. Its function is as follows. Catalyzes the condensation of carbamoyl phosphate and aspartate to form carbamoyl aspartate and inorganic phosphate, the committed step in the de novo pyrimidine nucleotide biosynthesis pathway. In Methanocella arvoryzae (strain DSM 22066 / NBRC 105507 / MRE50), this protein is Aspartate carbamoyltransferase catalytic subunit.